Here is a 327-residue protein sequence, read N- to C-terminus: Pectate lyase A (327 aa).

An N-terminal signal peptide occupies residues 1–19 (MQNLKFLIAAVSCLGPALA). Residue asparagine 99 is glycosylated (N-linked (GlcNAc...) asparagine). Positions 140, 169, and 173 each coordinate Ca(2+). Residue arginine 226 is part of the active site.

It belongs to the polysaccharide lyase 1 family. Ca(2+) serves as cofactor.

The protein resides in the secreted. It carries out the reaction Eliminative cleavage of (1-&gt;4)-alpha-D-galacturonan to give oligosaccharides with 4-deoxy-alpha-D-galact-4-enuronosyl groups at their non-reducing ends.. In terms of biological role, pectinolytic enzyme consist of four classes of enzymes: pectin lyase, polygalacturonase, pectin methylesterase and rhamnogalacturonase. Among pectinolytic enzymes, pectin lyase is the most important in depolymerization of pectin, since it cleaves internal glycosidic bonds of highly methylated pectins. Favors pectate, the anion, over pectin, the methyl ester. This is Pectate lyase A (plyA) from Emericella nidulans (strain FGSC A4 / ATCC 38163 / CBS 112.46 / NRRL 194 / M139) (Aspergillus nidulans).